A 91-amino-acid chain; its full sequence is Protein translocase subunit SecG (91 aa).

2 helical membrane passes run 16–36 (HTFL…VVLL) and 71–91 (LTII…YLGM).

It belongs to the SecG family. In terms of assembly, component of the Sec protein translocase complex. Heterotrimer consisting of SecY, SecE and SecG subunits. The heterotrimers can form oligomers, although 1 heterotrimer is thought to be able to translocate proteins. Interacts with SecDF, and other proteins may be involved. The channel interacts with SecA via subunit SecY. Also part of the accessory SecA2/SecY2 protein translocation apparatus required to export cell wall protein GspB.

The protein resides in the cell membrane. Functionally, subunit of the protein translocation channel SecYEG. While not essential, it considerably increases the export efficiency of extracellular proteins. This Staphylococcus aureus (strain NCTC 8325 / PS 47) protein is Protein translocase subunit SecG.